We begin with the raw amino-acid sequence, 185 residues long: Elongation factor P (185 aa).

The protein belongs to the elongation factor P family.

Its subcellular location is the cytoplasm. It participates in protein biosynthesis; polypeptide chain elongation. Functionally, involved in peptide bond synthesis. Stimulates efficient translation and peptide-bond synthesis on native or reconstituted 70S ribosomes in vitro. Probably functions indirectly by altering the affinity of the ribosome for aminoacyl-tRNA, thus increasing their reactivity as acceptors for peptidyl transferase. The protein is Elongation factor P of Anoxybacillus flavithermus (strain DSM 21510 / WK1).